A 101-amino-acid chain; its full sequence is Small ribosomal subunit protein uS14 (101 aa).

This sequence belongs to the universal ribosomal protein uS14 family. Part of the 30S ribosomal subunit. Contacts proteins S3 and S10.

In terms of biological role, binds 16S rRNA, required for the assembly of 30S particles and may also be responsible for determining the conformation of the 16S rRNA at the A site. This Haemophilus influenzae (strain 86-028NP) protein is Small ribosomal subunit protein uS14.